Reading from the N-terminus, the 89-residue chain is Myrmicitoxin(1)-Pm2a (89 aa).

Positions M1–C22 are cleaved as a signal peptide. Positions A23–P61 are excised as a propeptide. Residue N88 is modified to Asparagine amide.

It belongs to the formicidae venom clade 1 family. As to expression, expressed by the venom gland.

It is found in the secreted. Toxin that potently modulates mammalian voltage-gated sodium (Nav) channels, reducing the voltage threshold for activation and inhibiting channel inactivation. Shows activity on hNav1.6/SCN8A (EC(50)=176 nM), mNav1.7/SCN9A (EC(50)=102 nM) and hNav1.7 (EC(50)=154 nM). In vivo, causes spontaneous, gradual and long-lasting nocifensive behaviors by intraplantar injection in mice, as well as pronounced swelling of the injected paw. Does not have effect on insects (blowflies). The polypeptide is Myrmicitoxin(1)-Pm2a (Pogonomyrmex maricopa (Maricopa harvester ant)).